We begin with the raw amino-acid sequence, 370 residues long: Cobalt-precorrin-5B C(1)-methyltransferase (370 aa).

This sequence belongs to the CbiD family.

The enzyme catalyses Co-precorrin-5B + S-adenosyl-L-methionine = Co-precorrin-6A + S-adenosyl-L-homocysteine. The protein operates within cofactor biosynthesis; adenosylcobalamin biosynthesis; cob(II)yrinate a,c-diamide from sirohydrochlorin (anaerobic route): step 6/10. Functionally, catalyzes the methylation of C-1 in cobalt-precorrin-5B to form cobalt-precorrin-6A. The sequence is that of Cobalt-precorrin-5B C(1)-methyltransferase from Pseudomonas syringae pv. tomato (strain ATCC BAA-871 / DC3000).